Reading from the N-terminus, the 273-residue chain is Outer surface protein A (273 aa).

The N-terminal stretch at 1–16 (MKKYLLGIGLILALIA) is a signal peptide. C17 is lipidated: N-palmitoyl cysteine. Residue C17 is the site of S-diacylglycerol cysteine attachment.

This sequence belongs to the OspA lipoprotein family.

It localises to the cell outer membrane. Its subcellular location is the cell surface. The protein is Outer surface protein A of Borreliella burgdorferi (strain N40) (Borrelia burgdorferi).